Reading from the N-terminus, the 231-residue chain is 7-cyano-7-deazaguanine synthase (231 aa).

8–18 (FSGGQDSTTCL) contributes to the ATP binding site. Residues Cys-188, Cys-197, Cys-200, and Cys-203 each contribute to the Zn(2+) site.

Belongs to the QueC family. Zn(2+) is required as a cofactor.

The catalysed reaction is 7-carboxy-7-deazaguanine + NH4(+) + ATP = 7-cyano-7-deazaguanine + ADP + phosphate + H2O + H(+). The protein operates within purine metabolism; 7-cyano-7-deazaguanine biosynthesis. Catalyzes the ATP-dependent conversion of 7-carboxy-7-deazaguanine (CDG) to 7-cyano-7-deazaguanine (preQ(0)). This chain is 7-cyano-7-deazaguanine synthase, found in Salmonella choleraesuis (strain SC-B67).